Here is a 206-residue protein sequence, read N- to C-terminus: ATP phosphoribosyltransferase (206 aa).

This sequence belongs to the ATP phosphoribosyltransferase family. Short subfamily. Heteromultimer composed of HisG and HisZ subunits.

Its subcellular location is the cytoplasm. It catalyses the reaction 1-(5-phospho-beta-D-ribosyl)-ATP + diphosphate = 5-phospho-alpha-D-ribose 1-diphosphate + ATP. The protein operates within amino-acid biosynthesis; L-histidine biosynthesis; L-histidine from 5-phospho-alpha-D-ribose 1-diphosphate: step 1/9. Catalyzes the condensation of ATP and 5-phosphoribose 1-diphosphate to form N'-(5'-phosphoribosyl)-ATP (PR-ATP). Has a crucial role in the pathway because the rate of histidine biosynthesis seems to be controlled primarily by regulation of HisG enzymatic activity. The protein is ATP phosphoribosyltransferase of Brachyspira hyodysenteriae (strain ATCC 49526 / WA1).